Here is a 289-residue protein sequence, read N- to C-terminus: uncharacterized protein (289 aa).

The signal sequence occupies residues 1–23 (MIKNYKLLLFTTFTLFFITFVSG). N-linked (GlcNAc...) asparagine glycans are attached at residues N74, N101, N132, and N285.

It is found in the secreted. This is an uncharacterized protein from Dictyostelium discoideum (Social amoeba).